The chain runs to 500 residues: L-arabinose isomerase (500 aa).

4 residues coordinate Mn(2+): glutamate 306, glutamate 333, histidine 350, and histidine 450.

The protein belongs to the arabinose isomerase family. As to quaternary structure, homohexamer. Requires Mn(2+) as cofactor.

The enzyme catalyses beta-L-arabinopyranose = L-ribulose. The protein operates within carbohydrate degradation; L-arabinose degradation via L-ribulose; D-xylulose 5-phosphate from L-arabinose (bacterial route): step 1/3. Catalyzes the conversion of L-arabinose to L-ribulose. The sequence is that of L-arabinose isomerase from Escherichia coli O139:H28 (strain E24377A / ETEC).